We begin with the raw amino-acid sequence, 220 residues long: 7-cyano-7-deazaguanine synthase (220 aa).

10–20 serves as a coordination point for ATP; sequence FSGGQDSTTCL. Zn(2+)-binding residues include Cys186, Cys195, Cys198, and Cys201.

This sequence belongs to the QueC family. As to quaternary structure, homodimer. Requires Zn(2+) as cofactor.

The catalysed reaction is 7-carboxy-7-deazaguanine + NH4(+) + ATP = 7-cyano-7-deazaguanine + ADP + phosphate + H2O + H(+). Its pathway is purine metabolism; 7-cyano-7-deazaguanine biosynthesis. Functionally, catalyzes the ATP-dependent conversion of 7-carboxy-7-deazaguanine (CDG) to 7-cyano-7-deazaguanine (preQ(0)). The chain is 7-cyano-7-deazaguanine synthase from Bacillus cereus (strain AH187).